Reading from the N-terminus, the 156-residue chain is 6,7-dimethyl-8-ribityllumazine synthase (156 aa).

5-amino-6-(D-ribitylamino)uracil-binding positions include Phe22, Ala56–Glu58, and Ala80–Ile82. (2S)-2-hydroxy-3-oxobutyl phosphate is bound at residue Ser85–Thr86. The active-site Proton donor is the His88. Phe113 provides a ligand contact to 5-amino-6-(D-ribitylamino)uracil. Arg127 serves as a coordination point for (2S)-2-hydroxy-3-oxobutyl phosphate.

The protein belongs to the DMRL synthase family.

It carries out the reaction (2S)-2-hydroxy-3-oxobutyl phosphate + 5-amino-6-(D-ribitylamino)uracil = 6,7-dimethyl-8-(1-D-ribityl)lumazine + phosphate + 2 H2O + H(+). Its pathway is cofactor biosynthesis; riboflavin biosynthesis; riboflavin from 2-hydroxy-3-oxobutyl phosphate and 5-amino-6-(D-ribitylamino)uracil: step 1/2. Catalyzes the formation of 6,7-dimethyl-8-ribityllumazine by condensation of 5-amino-6-(D-ribitylamino)uracil with 3,4-dihydroxy-2-butanone 4-phosphate. This is the penultimate step in the biosynthesis of riboflavin. The sequence is that of 6,7-dimethyl-8-ribityllumazine synthase from Caldicellulosiruptor saccharolyticus (strain ATCC 43494 / DSM 8903 / Tp8T 6331).